The chain runs to 447 residues: Na(+)-translocating NADH-quinone reductase subunit A (447 aa).

This sequence belongs to the NqrA family. As to quaternary structure, composed of six subunits; NqrA, NqrB, NqrC, NqrD, NqrE and NqrF.

It catalyses the reaction a ubiquinone + n Na(+)(in) + NADH + H(+) = a ubiquinol + n Na(+)(out) + NAD(+). Functionally, NQR complex catalyzes the reduction of ubiquinone-1 to ubiquinol by two successive reactions, coupled with the transport of Na(+) ions from the cytoplasm to the periplasm. NqrA to NqrE are probably involved in the second step, the conversion of ubisemiquinone to ubiquinol. The chain is Na(+)-translocating NADH-quinone reductase subunit A from Haemophilus influenzae (strain 86-028NP).